A 169-amino-acid chain; its full sequence is Translationally-controlled tumor protein homolog (169 aa).

The region spanning M1–F169 is the TCTP domain.

The protein belongs to the TCTP family.

It is found in the cytoplasm. Its function is as follows. Involved in calcium binding and microtubule stabilization. The chain is Translationally-controlled tumor protein homolog from Branchiostoma belcheri (Amphioxus).